A 103-amino-acid chain; its full sequence is Thioredoxin-1 (103 aa).

One can recognise a Thioredoxin domain in the interval 2-103 (VKQVSDSSEF…KLEASIKANL (102 aa)). Catalysis depends on nucleophile residues cysteine 30 and cysteine 33. Cysteine 30 and cysteine 33 are joined by a disulfide.

This sequence belongs to the thioredoxin family.

Participates in various redox reactions through the reversible oxidation of its active center dithiol to a disulfide and catalyzes dithiol-disulfide exchange reactions. This Schizosaccharomyces pombe (strain 972 / ATCC 24843) (Fission yeast) protein is Thioredoxin-1 (trx1).